We begin with the raw amino-acid sequence, 450 residues long: MKTLILAAGLGKRMNSKYPKVIHKIFNKPMINWVIETAKNFGKVAVVLGHKYELVKKVIPEDVEIYLQNQQLGTAHAVMSAIEFVSPNDNLLILYGDVPFISHETLKRLEKEHVKSNSDVTILTSILENPTGYGRIVRDGKIRIIEDKDATEEVKKIKEINTGIYIIKGNFLIENINKIENNNTQKEYYLTDILKFTDNISTVTTNDVDEITGVNNRIQLANLEKKIRRKINEKLMNQGVRIIDPNAVYIDPQVKIGRDTLIYPFTFIEGETEIGEDCVIGPLTRIKESKIGNKVTINRSEVEKSVIEDNVSVGPFARLREGTTLDENVKIGNFVETKKSSIGKNSKAQHLTYLGDATIGNNVNIGAGTITCNYDGQTKHPTYIEDNAFIGSNNSLVAPVKIGKNAITAAGSTITNNVPENSLAIARQKQINKENWVLRKGGQKNANNKK.

A pyrophosphorylase region spans residues 1 to 217 (MKTLILAAGL…VDEITGVNNR (217 aa)). UDP-N-acetyl-alpha-D-glucosamine is bound by residues 6–9 (LAAG), lysine 20, glutamine 68, 73–74 (GT), 95–97 (YGD), glycine 134, glutamate 146, asparagine 161, and asparagine 215. Aspartate 97 is a Mg(2+) binding site. Position 215 (asparagine 215) interacts with Mg(2+). The interval 218–238 (IQLANLEKKIRRKINEKLMNQ) is linker. An N-acetyltransferase region spans residues 239 to 450 (GVRIIDPNAV…GGQKNANNKK (212 aa)). Positions 320 and 338 each coordinate UDP-N-acetyl-alpha-D-glucosamine. Histidine 350 serves as the catalytic Proton acceptor. Residues tyrosine 353 and asparagine 364 each coordinate UDP-N-acetyl-alpha-D-glucosamine. Residues alanine 367, 373 to 374 (NY), serine 392, alanine 410, and arginine 427 contribute to the acetyl-CoA site.

In the N-terminal section; belongs to the N-acetylglucosamine-1-phosphate uridyltransferase family. It in the C-terminal section; belongs to the transferase hexapeptide repeat family. In terms of assembly, homotrimer. Mg(2+) serves as cofactor.

The protein localises to the cytoplasm. The enzyme catalyses alpha-D-glucosamine 1-phosphate + acetyl-CoA = N-acetyl-alpha-D-glucosamine 1-phosphate + CoA + H(+). It catalyses the reaction N-acetyl-alpha-D-glucosamine 1-phosphate + UTP + H(+) = UDP-N-acetyl-alpha-D-glucosamine + diphosphate. It functions in the pathway nucleotide-sugar biosynthesis; UDP-N-acetyl-alpha-D-glucosamine biosynthesis; N-acetyl-alpha-D-glucosamine 1-phosphate from alpha-D-glucosamine 6-phosphate (route II): step 2/2. It participates in nucleotide-sugar biosynthesis; UDP-N-acetyl-alpha-D-glucosamine biosynthesis; UDP-N-acetyl-alpha-D-glucosamine from N-acetyl-alpha-D-glucosamine 1-phosphate: step 1/1. The protein operates within bacterial outer membrane biogenesis; LPS lipid A biosynthesis. In terms of biological role, catalyzes the last two sequential reactions in the de novo biosynthetic pathway for UDP-N-acetylglucosamine (UDP-GlcNAc). The C-terminal domain catalyzes the transfer of acetyl group from acetyl coenzyme A to glucosamine-1-phosphate (GlcN-1-P) to produce N-acetylglucosamine-1-phosphate (GlcNAc-1-P), which is converted into UDP-GlcNAc by the transfer of uridine 5-monophosphate (from uridine 5-triphosphate), a reaction catalyzed by the N-terminal domain. This Thermosipho melanesiensis (strain DSM 12029 / CIP 104789 / BI429) protein is Bifunctional protein GlmU.